Reading from the N-terminus, the 175-residue chain is Translation initiation factor IF-3 (175 aa).

Belongs to the IF-3 family. In terms of assembly, monomer.

It is found in the cytoplasm. Its function is as follows. IF-3 binds to the 30S ribosomal subunit and shifts the equilibrium between 70S ribosomes and their 50S and 30S subunits in favor of the free subunits, thus enhancing the availability of 30S subunits on which protein synthesis initiation begins. The protein is Translation initiation factor IF-3 of Staphylococcus aureus (strain USA300).